The sequence spans 540 residues: Pentatricopeptide repeat-containing protein At1g80880, mitochondrial (540 aa).

The transit peptide at 1 to 87 (MAAIVAIGRK…ETFDINLTAL (87 aa)) directs the protein to the mitochondrion. PPR repeat units lie at residues 154–184 (DQKS…MFNV), 188–222 (TRKA…KHTP), 223–253 (YDEA…SKKL), 257–292 (DVEG…CITP), 293–327 (NKDS…GLAP), 328–362 (GIEV…GLKP), 363–397 (DSVT…NLSP), 402–428 (FHAF…DLGP), 429–463 (TEET…EIVA), and 464–498 (NPAL…GFVG). The disordered stretch occupies residues 514–540 (VRKSKRMNLQKVGSQEGYKGQRSVDRK).

This sequence belongs to the PPR family. P subfamily.

It localises to the mitochondrion. This chain is Pentatricopeptide repeat-containing protein At1g80880, mitochondrial, found in Arabidopsis thaliana (Mouse-ear cress).